The sequence spans 571 residues: Probable serine/threonine-protein kinase WNK4 (571 aa).

The region spanning 19–277 (GRFAEILGRG…AKELLQDPFL (259 aa)) is the Protein kinase domain. ATP-binding positions include 99–102 (TELF) and Lys-149. Residue Asp-166 is the Proton acceptor of the active site. The disordered stretch occupies residues 396–425 (EDDETPHDHHRHRTDSFHSSSSHASSSQAS). Over residues 412 to 425 (FHSSSSHASSSQAS) the composition is skewed to low complexity. Ser-522 carries the phosphoserine modification.

This sequence belongs to the protein kinase superfamily. Ser/Thr protein kinase family. WNK subfamily.

The catalysed reaction is L-seryl-[protein] + ATP = O-phospho-L-seryl-[protein] + ADP + H(+). It carries out the reaction L-threonyl-[protein] + ATP = O-phospho-L-threonyl-[protein] + ADP + H(+). In terms of biological role, may regulate flowering time by modulating the photoperiod pathway. This Arabidopsis thaliana (Mouse-ear cress) protein is Probable serine/threonine-protein kinase WNK4 (WNK4).